The following is a 197-amino-acid chain: NADH-quinone oxidoreductase subunit C (197 aa).

This sequence belongs to the complex I 30 kDa subunit family. NDH-1 is composed of 14 different subunits. Subunits NuoB, C, D, E, F, and G constitute the peripheral sector of the complex.

The protein localises to the cell inner membrane. The catalysed reaction is a quinone + NADH + 5 H(+)(in) = a quinol + NAD(+) + 4 H(+)(out). In terms of biological role, NDH-1 shuttles electrons from NADH, via FMN and iron-sulfur (Fe-S) centers, to quinones in the respiratory chain. The immediate electron acceptor for the enzyme in this species is believed to be ubiquinone. Couples the redox reaction to proton translocation (for every two electrons transferred, four hydrogen ions are translocated across the cytoplasmic membrane), and thus conserves the redox energy in a proton gradient. The protein is NADH-quinone oxidoreductase subunit C of Methylobacillus flagellatus (strain ATCC 51484 / DSM 6875 / VKM B-1610 / KT).